We begin with the raw amino-acid sequence, 96 residues long: UPF0125 protein YfjF (96 aa).

This sequence belongs to the UPF0125 (RnfH) family.

The chain is UPF0125 protein YfjF (yfjF) from Escherichia coli O157:H7.